The sequence spans 583 residues: Aspartate--tRNA ligase (583 aa).

Glu-169 contributes to the L-aspartate binding site. The interval 193–196 is aspartate; that stretch reads QLFK. Arg-215 is a binding site for L-aspartate. Residues 215-217 and Gln-224 each bind ATP; that span reads RDE. L-aspartate is bound at residue His-443. ATP is bound at residue Glu-477. Arg-484 contributes to the L-aspartate binding site. 529–532 serves as a coordination point for ATP; it reads GIDR.

This sequence belongs to the class-II aminoacyl-tRNA synthetase family. Type 1 subfamily. As to quaternary structure, homodimer.

Its subcellular location is the cytoplasm. The enzyme catalyses tRNA(Asp) + L-aspartate + ATP = L-aspartyl-tRNA(Asp) + AMP + diphosphate. Catalyzes the attachment of L-aspartate to tRNA(Asp) in a two-step reaction: L-aspartate is first activated by ATP to form Asp-AMP and then transferred to the acceptor end of tRNA(Asp). This chain is Aspartate--tRNA ligase, found in Stenotrophomonas maltophilia (strain K279a).